Reading from the N-terminus, the 188-residue chain is Trafficking protein particle complex subunit 5 (188 aa).

Residue Ser10 is modified to Phosphoserine.

The protein belongs to the TRAPP small subunits family. BET3 subfamily. Component of the multisubunit TRAPP (transport protein particle) complex, which includes at least TRAPPC2, TRAPPC2L, TRAPPC3, TRAPPC3L, TRAPPC4, TRAPPC5, TRAPPC8, TRAPPC9, TRAPPC10, TRAPPC11 and TRAPPC12.

It is found in the golgi apparatus. The protein resides in the cis-Golgi network. The protein localises to the endoplasmic reticulum. In terms of biological role, may play a role in vesicular transport from endoplasmic reticulum to Golgi. This chain is Trafficking protein particle complex subunit 5 (Trappc5), found in Mus musculus (Mouse).